Consider the following 258-residue polypeptide: MKITKLEKKKRLYLMELDNGDKCYITEDTIVRFMLSRDKVISEEELKEIQDFAQFSYGKNLALYHLSFKARTEKEVREYLKKYDIDENIVSQVIANLKEDKWINDGQYAYAIINTNQLSGDKGPYVLTQKLAQKGISKSTIEENLKEFDFSEVAQRVANKLLKKYEGKLPARALQDKIIQNLTNKGFSYSDAKIAFDDLDSQVEQETTQELIFKELDKQYTKYARKYEGYELKQRLTQVLARKGYDFSDIASALREYL.

The protein belongs to the RecX family.

It localises to the cytoplasm. Modulates RecA activity. This chain is Regulatory protein RecX, found in Streptococcus pneumoniae (strain 70585).